The chain runs to 124 residues: MRHYEIVFIVHPDQSEQVPAMIDRYKATLAAAGGKIHRIEDWGRRQMAYMIDKLAKAHYVCMNIECDQKTLEELEHAFKFNDAVLRHLIIKTKKAETEPSIMMKEVQREEARKSAQSDAPAVAA.

Residues 101 to 124 (IMMKEVQREEARKSAQSDAPAVAA) form a disordered region. The segment covering 105–115 (EVQREEARKSA) has biased composition (basic and acidic residues).

Belongs to the bacterial ribosomal protein bS6 family.

Binds together with bS18 to 16S ribosomal RNA. This Polynucleobacter asymbioticus (strain DSM 18221 / CIP 109841 / QLW-P1DMWA-1) (Polynucleobacter necessarius subsp. asymbioticus) protein is Small ribosomal subunit protein bS6.